The primary structure comprises 173 residues: NADH-ubiquinone oxidoreductase chain 6 (173 aa).

The next 5 membrane-spanning stretches (helical) occupy residues 1–21 (MTYFVLFLGLCFVLGGLAVAS), 27–47 (YGVVGLVLASVAGCGWLLSLG), 48–68 (VSFVSLVLFMVYLGGMLVVFV), 87–107 (VVGYGVGFVVVLVVGLVVGGF), and 139–159 (CGVGMFLVAGWGLLLTLFVVL).

The protein belongs to the complex I subunit 6 family.

It is found in the mitochondrion membrane. It catalyses the reaction a ubiquinone + NADH + 5 H(+)(in) = a ubiquinol + NAD(+) + 4 H(+)(out). Its function is as follows. Core subunit of the mitochondrial membrane respiratory chain NADH dehydrogenase (Complex I) that is believed to belong to the minimal assembly required for catalysis. Complex I functions in the transfer of electrons from NADH to the respiratory chain. The immediate electron acceptor for the enzyme is believed to be ubiquinone. This is NADH-ubiquinone oxidoreductase chain 6 (MT-ND6) from Aethia pygmaea (Whiskered auklet).